The following is a 286-amino-acid chain: Phosphatidylserine decarboxylase proenzyme (286 aa).

Active-site charge relay system; for autoendoproteolytic cleavage activity residues include Asp90, His147, and Ser253. The Schiff-base intermediate with substrate; via pyruvic acid; for decarboxylase activity role is filled by Ser253. A Pyruvic acid (Ser); by autocatalysis modification is found at Ser253.

This sequence belongs to the phosphatidylserine decarboxylase family. PSD-B subfamily. Prokaryotic type I sub-subfamily. Heterodimer of a large membrane-associated beta subunit and a small pyruvoyl-containing alpha subunit. Pyruvate serves as cofactor. Is synthesized initially as an inactive proenzyme. Formation of the active enzyme involves a self-maturation process in which the active site pyruvoyl group is generated from an internal serine residue via an autocatalytic post-translational modification. Two non-identical subunits are generated from the proenzyme in this reaction, and the pyruvate is formed at the N-terminus of the alpha chain, which is derived from the carboxyl end of the proenzyme. The autoendoproteolytic cleavage occurs by a canonical serine protease mechanism, in which the side chain hydroxyl group of the serine supplies its oxygen atom to form the C-terminus of the beta chain, while the remainder of the serine residue undergoes an oxidative deamination to produce ammonia and the pyruvoyl prosthetic group on the alpha chain. During this reaction, the Ser that is part of the protease active site of the proenzyme becomes the pyruvoyl prosthetic group, which constitutes an essential element of the active site of the mature decarboxylase.

It localises to the cell membrane. The catalysed reaction is a 1,2-diacyl-sn-glycero-3-phospho-L-serine + H(+) = a 1,2-diacyl-sn-glycero-3-phosphoethanolamine + CO2. It functions in the pathway phospholipid metabolism; phosphatidylethanolamine biosynthesis; phosphatidylethanolamine from CDP-diacylglycerol: step 2/2. Its function is as follows. Catalyzes the formation of phosphatidylethanolamine (PtdEtn) from phosphatidylserine (PtdSer). This Pseudoalteromonas atlantica (strain T6c / ATCC BAA-1087) protein is Phosphatidylserine decarboxylase proenzyme.